Consider the following 1543-residue polypeptide: Rho guanine nucleotide exchange factor 12 (1543 aa).

The disordered stretch occupies residues 1–62 (MSGTQSTITD…KTKSSSEESR (62 aa)). At serine 2 the chain carries N-acetylserine. A compositionally biased stretch (basic and acidic residues) spans 28–45 (SPTDKKQKVERSSSHDFD). Residue serine 41 is modified to Phosphoserine. Residues 72-151 (CVIIQKDDNG…LTVQGRPPGS (80 aa)) enclose the PDZ domain. Residues 194 to 262 (VGEENNVVHN…LSKATGSAQD (69 aa)) adopt a coiled-coil conformation. The tract at residues 281-355 (AEADPGDGLC…GAPHIIGAED (75 aa)) is disordered. The segment covering 293 to 312 (DWSSGDASRPSSDSADSPKS) has biased composition (low complexity). Serine 309 is modified (phosphoserine). Over residues 313–329 (SLRERSYLEEAPERSEG) the composition is skewed to basic and acidic residues. Serine 341 is subject to Phosphoserine. Residues 367 to 558 (GQCSCFQSIE…LMYMKYLGVK (192 aa)) form the RGSL domain. The interval 574-710 (FLPKIKQSMK…DSTPRVPTTV (137 aa)) is disordered. Residues 582-592 (MKKDREGEEKG) show a composition bias toward basic and acidic residues. Serine 637 is subject to Phosphoserine. Residues 663-676 (ASSMSSATSGTALS) show a composition bias toward low complexity. Threonine 736 bears the Phosphothreonine mark. The DH domain maps to 787-977 (KRQEVINELF…RQILNYVNQA (191 aa)). A coiled-coil region spans residues 981–1004 (AENKQRLEDYQRRLDTSNLKLSEY). In terms of domain architecture, PH spans 1019–1132 (KMIHEGPLVW…WQDLICRMAA (114 aa)). The disordered stretch occupies residues 1137–1158 (QSTKPIPLPQPPPCEGDNDEEE). Serine 1288, serine 1327, and serine 1377 each carry phosphoserine. Disordered stretches follow at residues 1386–1405 (EAHS…KEEK) and 1441–1468 (PVTG…GPVS). Positions 1450–1460 (SSHQQQHSPQN) are enriched in polar residues. Phosphoserine is present on residues serine 1457 and serine 1540.

Interacts with GNA12 and GNA13, probably through the RGS-like domain, with RHOA, PLXNB1 and PLXNB2, and through its PDZ domain with IGF1R beta subunit. Interacts with GCSAM. Found in a complex with ARHGEF11 and ARHGEF12; binding to ARHGEF11 and ARHGEF12 enhances CDC42 GEF activity of PLEKHG4B, and PLEKHG4B, in turn, inhibits ARHGEF11- and ARHGEF12-mediated RHOA activation. As to expression, expressed in brain, predominantly in neuronal cell bodies.

The protein localises to the cytoplasm. Its subcellular location is the membrane. May play a role in the regulation of RhoA GTPase by guanine nucleotide-binding alpha-12 (GNA12) and alpha-13 (GNA13). Acts as guanine nucleotide exchange factor (GEF) for RhoA GTPase and may act as GTPase-activating protein (GAP) for GNA12 and GNA13. This is Rho guanine nucleotide exchange factor 12 (Arhgef12) from Mus musculus (Mouse).